Here is a 571-residue protein sequence, read N- to C-terminus: Kelch-like protein 28 (571 aa).

Residues 35-102 (CDIILRVGDV…AYTGTVFISQ (68 aa)) enclose the BTB domain. Kelch repeat units follow at residues 284–331 (VLCA…VLDQ), 332–386 (KVYV…VLAG), 387–433 (ELYA…VLDG), 435–479 (IYAI…VMLG), 480–526 (FIFV…VIDN), and 528–570 (LYVV…GLTA).

The chain is Kelch-like protein 28 (KLHL28) from Homo sapiens (Human).